A 505-amino-acid chain; its full sequence is DNA primase DnaG (505 aa).

In terms of domain architecture, Toprim spans 167 to 241 (DAVIVVEGRA…DVDYVAFAPP (75 aa)). Positions 173, 215, and 217 each coordinate Mg(2+). The interval 268-410 (DEPNLREAAT…PLDNEPRSIE (143 aa)) is disordered. Positions 318–327 (AGVVAGGARS) are enriched in low complexity. 2 stretches are compositionally biased toward acidic residues: residues 349 to 376 (GEVDEVGEDREGDMESDSDTADINDAEF) and 384 to 402 (PNLDEAADAESVEETDAPL).

This sequence belongs to the archaeal DnaG primase family. As to quaternary structure, forms a ternary complex with MCM helicase and DNA. Requires Mg(2+) as cofactor.

The enzyme catalyses ssDNA + n NTP = ssDNA/pppN(pN)n-1 hybrid + (n-1) diphosphate.. Functionally, RNA polymerase that catalyzes the synthesis of short RNA molecules used as primers for DNA polymerase during DNA replication. The sequence is that of DNA primase DnaG from Halorubrum lacusprofundi (strain ATCC 49239 / DSM 5036 / JCM 8891 / ACAM 34).